The sequence spans 325 residues: MEQLRSHPRLVRKLQEALGDQLCVALDDSNVVEIMLNPDGKLFIERLGHGVAPAGEMSSAAAEMVIGTVAHALQSEVDTEQPIISGELPIGGHRFEGLLPPVVAKPSFTIRRRASRLIPLDDYVRSGVMTEAQAATIRSAIDSRLNIIISGGTASGKTTLANAVIHEIVRSAPEDRLVILEDTAEIQCAADNAVLLRTSDTVDMARLLKSTMRLRPDRIVVGEVRDGAALTLLKAWNTGHPGGVATIHSNTATSALRRLEQLTAEASQQPMHEVIGEVVDLIVSIERTPRGRRVRDIIQVERFANGRYEIESDQLTEEREERHVA.

151 to 158 (GGTASGKT) is a binding site for ATP.

It belongs to the GSP E family.

Its subcellular location is the cytoplasm. The protein is Probable conjugal transfer protein TrbB (trbB) of Sinorhizobium fredii (strain NBRC 101917 / NGR234).